The primary structure comprises 261 residues: Mannose-specific lectin 2 (261 aa).

Residues 1–23 (MAKLLLFLLPAILGLLIPRSAVA) form the signal peptide. Bulb-type lectin domains are found at residues 26–131 (TNYL…PWVP) and 145–252 (DNLL…SKRS). Residues 51–55 (QNDCN), Tyr-59, Trp-63, Gln-64, 170–174 (QGDCN), Tyr-178, and 182–185 (YGWQ) each bind beta-D-mannose. The Carbohydrate-binding motif 1 signature appears at 51–59 (QNDCNLVLY). Intrachain disulfides connect Cys-54–Cys-74 and Cys-173–Cys-195. The Carbohydrate-binding motif 2 motif lies at 170-178 (QGDCNLVLY).

As to quaternary structure, forms heterotetramer of 2 chains 1 and 2 chains 2 arranged as a dimer of chain 1 and chain 2 heterodimers.

Functionally, mannose-specific lectin. Shows agglutinating activity towards erythrocytes from rabbit. The sequence is that of Mannose-specific lectin 2 from Colocasia esculenta (Wild taro).